Reading from the N-terminus, the 480-residue chain is Protein disulfide-isomerase 5-4 (480 aa).

2 N-linked (GlcNAc...) asparagine glycosylation sites follow: Asn74 and Asn99. The 144-residue stretch at 120–263 folds into the Thioredoxin domain; the sequence is FHAGEVLSLI…LVKMVVSLVE (144 aa). Catalysis depends on nucleophile residues Cys170 and Cys173. Residues Cys170 and Cys173 are joined by a disulfide bond. N-linked (GlcNAc...) asparagine glycosylation is found at Asn280, Asn326, and Asn376. The helical transmembrane segment at 439–459 threads the bilayer; sequence FSHFITNVCAIIGGVFTVAGI.

This sequence belongs to the protein disulfide isomerase family. Widely expressed.

The protein localises to the membrane. In terms of biological role, acts as a protein-folding catalyst that interacts with nascent polypeptides to catalyze the formation, isomerization, and reduction or oxidation of disulfide bonds. The polypeptide is Protein disulfide-isomerase 5-4 (PDIL5-4) (Arabidopsis thaliana (Mouse-ear cress)).